The following is a 223-amino-acid chain: Adenylate kinase (223 aa).

Residue 10-15 coordinates ATP; sequence GSGKGT. Residues 30-59 form an NMP region; it reads ESGAIFREHIGGGTELGMKAKGYIDKGELV. Residues S31, R36, 57–59, 84–87, and Q91 each bind AMP; these read ELV and GFPR. The LID stretch occupies residues 125 to 164; it reads GRRLCANDPNHPNNIFIDAIKPNGDKCRVCGGDLKTRSDD. R126 provides a ligand contact to ATP. Positions 161 and 173 each coordinate AMP. Residue G209 participates in ATP binding.

It belongs to the adenylate kinase family. Monomer.

It localises to the cytoplasm. It catalyses the reaction AMP + ATP = 2 ADP. Its pathway is purine metabolism; AMP biosynthesis via salvage pathway; AMP from ADP: step 1/1. Catalyzes the reversible transfer of the terminal phosphate group between ATP and AMP. Plays an important role in cellular energy homeostasis and in adenine nucleotide metabolism. The sequence is that of Adenylate kinase from Solidesulfovibrio magneticus (strain ATCC 700980 / DSM 13731 / RS-1) (Desulfovibrio magneticus).